The following is a 253-amino-acid chain: Anamorsin homolog (253 aa).

Residues 4 to 129 (FKGLQKSLYI…ETGSSARLSF (126 aa)) are N-terminal SAM-like domain. The interval 130–161 (AKKNSSTLNVWKISGDDDELIDEEDLLDEVDK) is linker. Positions 172, 181, 184, and 186 each coordinate [2Fe-2S] cluster. A fe-S binding site A region spans residues 172–186 (CSTTGKRKACKNCSC). [4Fe-4S] cluster contacts are provided by Cys-214, Cys-217, Cys-225, and Cys-228. 2 short sequence motifs (cx2C motif) span residues 214-217 (CGNC) and 225-228 (CSSC). A fe-S binding site B region spans residues 214–228 (CGNCYLGDAFRCSSC).

Belongs to the anamorsin family. As to quaternary structure, monomer. It depends on [2Fe-2S] cluster as a cofactor. Requires [4Fe-4S] cluster as cofactor.

Its subcellular location is the cytoplasm. The protein resides in the mitochondrion intermembrane space. Its function is as follows. Component of the cytosolic iron-sulfur (Fe-S) protein assembly (CIA) machinery. Required for the maturation of extramitochondrial Fe-S proteins. Part of an electron transfer chain functioning in an early step of cytosolic Fe-S biogenesis, facilitating the de novo assembly of a [4Fe-4S] cluster on the cytosolic Fe-S scaffold complex. Electrons are transferred from NADPH via a FAD- and FMN-containing diflavin oxidoreductase. Together with the diflavin oxidoreductase, also required for the assembly of the diferric tyrosyl radical cofactor of ribonucleotide reductase (RNR), probably by providing electrons for reduction during radical cofactor maturation in the catalytic small subunit. In Drosophila willistoni (Fruit fly), this protein is Anamorsin homolog.